The sequence spans 245 residues: 1-(5-phosphoribosyl)-5-[(5-phosphoribosylamino)methylideneamino] imidazole-4-carboxamide isomerase (245 aa).

The active-site Proton acceptor is Asp-11. The active-site Proton donor is Asp-132.

Belongs to the HisA/HisF family.

It is found in the cytoplasm. It catalyses the reaction 1-(5-phospho-beta-D-ribosyl)-5-[(5-phospho-beta-D-ribosylamino)methylideneamino]imidazole-4-carboxamide = 5-[(5-phospho-1-deoxy-D-ribulos-1-ylimino)methylamino]-1-(5-phospho-beta-D-ribosyl)imidazole-4-carboxamide. It participates in amino-acid biosynthesis; L-histidine biosynthesis; L-histidine from 5-phospho-alpha-D-ribose 1-diphosphate: step 4/9. This is 1-(5-phosphoribosyl)-5-[(5-phosphoribosylamino)methylideneamino] imidazole-4-carboxamide isomerase from Geobacillus thermodenitrificans (strain NG80-2).